The sequence spans 412 residues: Phosphoglycerate kinase (412 aa).

Residues 24 to 26, R40, 63 to 66, R122, and R162 each bind substrate; these read DLN and HLGR. ATP contacts are provided by residues K212, G300, E331, and 360 to 363; that span reads GGDS.

It belongs to the phosphoglycerate kinase family. In terms of assembly, monomer.

It is found in the cytoplasm. It catalyses the reaction (2R)-3-phosphoglycerate + ATP = (2R)-3-phospho-glyceroyl phosphate + ADP. It participates in carbohydrate degradation; glycolysis; pyruvate from D-glyceraldehyde 3-phosphate: step 2/5. The polypeptide is Phosphoglycerate kinase (pgk) (Mycobacterium bovis (strain ATCC BAA-935 / AF2122/97)).